Here is a 141-residue protein sequence, read N- to C-terminus: Envelope protein A28 homolog (141 aa).

Residues 1 to 21 traverse the membrane as a helical; Signal-anchor for type II membrane protein segment; sequence MNPTSIVLIVIATVAVCLIIM. Residues 22-141 are Virion surface-facing; that stretch reads QIYYIYENYD…QDCIFLKSVI (120 aa).

It belongs to the poxviridae A28 protein family. In terms of processing, contains two intramolecular disulfide bonds. They are created by the viral disulfide bond formation pathway, a poxvirus-specific pathway that operates on the cytoplasmic side of the MV membranes.

Its subcellular location is the virion membrane. In terms of biological role, envelope protein required for virus entry into host cell and for cell-cell fusion (syncytium formation). The polypeptide is Envelope protein A28 homolog (Erythrocebus patas (Red guenon)).